The chain runs to 218 residues: tRNA (guanine-N(7)-)-methyltransferase (218 aa).

The segment at 1–26 (MRLKNKPWANELVEEHPESALDRPDP) is disordered. Over residues 13 to 26 (VEEHPESALDRPDP) the composition is skewed to basic and acidic residues. S-adenosyl-L-methionine contacts are provided by Glu45, Glu70, Asp97, and Asp119. Asp119 is an active-site residue. Lys123 contacts substrate. Positions 125-130 (RHEKRR) are interaction with RNA. Residues Asp155 and 195-198 (TEYE) each bind substrate.

It belongs to the class I-like SAM-binding methyltransferase superfamily. TrmB family.

The catalysed reaction is guanosine(46) in tRNA + S-adenosyl-L-methionine = N(7)-methylguanosine(46) in tRNA + S-adenosyl-L-homocysteine. It functions in the pathway tRNA modification; N(7)-methylguanine-tRNA biosynthesis. Catalyzes the formation of N(7)-methylguanine at position 46 (m7G46) in tRNA. This chain is tRNA (guanine-N(7)-)-methyltransferase, found in Lactobacillus delbrueckii subsp. bulgaricus (strain ATCC 11842 / DSM 20081 / BCRC 10696 / JCM 1002 / NBRC 13953 / NCIMB 11778 / NCTC 12712 / WDCM 00102 / Lb 14).